The primary structure comprises 70 residues: UPF0270 protein VP2791 (70 aa).

The protein belongs to the UPF0270 family.

This is UPF0270 protein VP2791 from Vibrio parahaemolyticus serotype O3:K6 (strain RIMD 2210633).